The chain runs to 474 residues: 3-isopropylmalate dehydratase large subunit (474 aa).

The [4Fe-4S] cluster site is built by cysteine 355, cysteine 415, and cysteine 418.

The protein belongs to the aconitase/IPM isomerase family. LeuC type 1 subfamily. Heterodimer of LeuC and LeuD. It depends on [4Fe-4S] cluster as a cofactor.

It catalyses the reaction (2R,3S)-3-isopropylmalate = (2S)-2-isopropylmalate. It functions in the pathway amino-acid biosynthesis; L-leucine biosynthesis; L-leucine from 3-methyl-2-oxobutanoate: step 2/4. Its function is as follows. Catalyzes the isomerization between 2-isopropylmalate and 3-isopropylmalate, via the formation of 2-isopropylmaleate. The chain is 3-isopropylmalate dehydratase large subunit from Shewanella putrefaciens (strain CN-32 / ATCC BAA-453).